Consider the following 392-residue polypeptide: Stilbene synthase 3 (392 aa).

Substrate is bound at residue 55-58 (KFNR). The active site involves C164. Substrate is bound by residues L267 and 305–307 (GGP).

This sequence belongs to the thiolase-like superfamily. Chalcone/stilbene synthases family. Homodimer.

The protein localises to the cytoplasm. It catalyses the reaction 4-coumaroyl-CoA + 3 malonyl-CoA + 3 H(+) = trans-resveratrol + 4 CO2 + 4 CoA. Its pathway is phytoalexin biosynthesis; 3,4',5-trihydroxystilbene biosynthesis; 3,4',5-trihydroxystilbene from trans-4-coumarate: step 2/2. In terms of biological role, mediates resistance to pathogens which are sensitive to stilbenes. The chain is Stilbene synthase 3 from Vitis vinifera (Grape).